We begin with the raw amino-acid sequence, 333 residues long: NADH-quinone oxidoreductase subunit H (333 aa).

8 helical membrane-spanning segments follow: residues 15 to 35 (IALFFGLGALLLAVVLAFVTY), 88 to 108 (YVLAPIIAFVPSFMVLAVLPF), 117 to 137 (IGVGLLYYIAVSGLTTVGVVA), 165 to 185 (LVMSALGVVLLAGSMNLVDIV), 191 to 211 (VWFIFAQPLAFLIFLIAAVAE), 241 to 261 (FFMLAEYVYLFAMAALVTILF), 274 to 294 (IPGAVWFALKFCAVVFVLIWF), and 313 to 333 (VLLPLSLVNIVLTAVVKAWFF).

The protein belongs to the complex I subunit 1 family. As to quaternary structure, NDH-1 is composed of 14 different subunits. Subunits NuoA, H, J, K, L, M, N constitute the membrane sector of the complex.

The protein localises to the cell membrane. The enzyme catalyses a quinone + NADH + 5 H(+)(in) = a quinol + NAD(+) + 4 H(+)(out). Functionally, NDH-1 shuttles electrons from NADH, via FMN and iron-sulfur (Fe-S) centers, to quinones in the respiratory chain. The immediate electron acceptor for the enzyme in this species is believed to be ubiquinone. Couples the redox reaction to proton translocation (for every two electrons transferred, four hydrogen ions are translocated across the cytoplasmic membrane), and thus conserves the redox energy in a proton gradient. This subunit may bind ubiquinone. This Geobacillus kaustophilus (strain HTA426) protein is NADH-quinone oxidoreductase subunit H.